The sequence spans 891 residues: Iron-regulated surface determinant protein H (891 aa).

The signal sequence occupies residues 1 to 40; it reads MNKHHPKLRSFYSIRKSTLGVASVIVSTLFLITSQHQAQA. The segment at 42–77 is disordered; it reads ENTNTSDKISENQNNNATTTQQPKDTNQTQPATQPV. Residues 53–63 are compositionally biased toward low complexity; sequence NQNNNATTTQQ. Over residues 64–77 the composition is skewed to polar residues; the sequence is PKDTNQTQPATQPV. One can recognise an NEAT 1 domain in the interval 105 to 232; it reads DIGPREQVNF…IYNDPSLVKS (128 aa). The interval 239–324 is disordered; that stretch reads VTNDQSSSDA…NQSDVNQQYP (86 aa). A compositionally biased stretch (low complexity) spans 240 to 276; sequence TNDQSSSDASNQTNTNTSNQNTSTTNNANNQPQATTN. The segment covering 277–323 has biased composition (polar residues); that stretch reads MSQPAQPKSSANADQASSQPAHETNSNGNTNDKTNESSNQSDVNQQY. NEAT domains lie at 345 to 471 and 543 to 660; these read TADN…DYVD and QLTD…TKDD. Disordered stretches follow at residues 657–718, 752–777, and 835–864; these read TKDD…DADN, IAKD…KDSN, and TVKT…GETT. Composition is skewed to polar residues over residues 663 to 677 and 687 to 697; these read SQNN…QTGQ and AENSSTATNPK. Residues 698–718 show a composition bias toward basic and acidic residues; sequence DASDKADVIEPESDVVKDADN. Residues 835-850 are compositionally biased toward basic and acidic residues; that stretch reads TVKTKEKAGTPSKENK. Residues 851 to 864 show a composition bias toward polar residues; that stretch reads LSQSKMLPKTGETT. The LPXTG sorting signal signature appears at 857 to 861; it reads LPKTG. Thr-860 is subject to Pentaglycyl murein peptidoglycan amidated threonine. The propeptide at 861–891 is removed by sortase; that stretch reads GETTSSQSWWGLYALLGMLALFIPKFRKESK.

It belongs to the IsdH family.

The protein resides in the secreted. It localises to the cell wall. Its function is as follows. Binds human plasma haptoglobin-hemoglobin complexes, haptoglobin and hemoglobin. Binds haptoglobin-hemoglobin complexes with significantly higher affinity than haptoglobin alone. This chain is Iron-regulated surface determinant protein H (isdH), found in Staphylococcus aureus (strain N315).